The following is a 241-amino-acid chain: 2-C-methyl-D-erythritol 4-phosphate cytidylyltransferase (241 aa).

This sequence belongs to the IspD/TarI cytidylyltransferase family. IspD subfamily.

The catalysed reaction is 2-C-methyl-D-erythritol 4-phosphate + CTP + H(+) = 4-CDP-2-C-methyl-D-erythritol + diphosphate. Its pathway is isoprenoid biosynthesis; isopentenyl diphosphate biosynthesis via DXP pathway; isopentenyl diphosphate from 1-deoxy-D-xylulose 5-phosphate: step 2/6. In terms of biological role, catalyzes the formation of 4-diphosphocytidyl-2-C-methyl-D-erythritol from CTP and 2-C-methyl-D-erythritol 4-phosphate (MEP). This is 2-C-methyl-D-erythritol 4-phosphate cytidylyltransferase from Hahella chejuensis (strain KCTC 2396).